Reading from the N-terminus, the 184-residue chain is MASETYPSQILHAQREVRDAYFNQADCHPARANQILEAKKICLLDVYHTNHYSVFTFCVDNYPNLRFTFVSSKNNEMNGLSNPLDNVLVEAMVRRTHARNLLAACKIRNIEVPRVVGLDLRSGILISKLELKQPQFQSLTEDFVNHSTNQEEARVHQKHVLLISLILLCKQAVLESFQEKKRSS.

This is an uncharacterized protein from Chlamydia pneumoniae (Chlamydophila pneumoniae).